Reading from the N-terminus, the 410-residue chain is Chaperone protein dnaJ 15 (410 aa).

The region spanning 17-82 (DPYEVLCVSK…EKRRHYDNAG (66 aa)) is the J domain. The stretch at 284-344 (AKTYEDTTEK…TVDELLKQRD (61 aa)) forms a coiled coil. Residues 351-410 (SVVKTPSGNNLSNGSSSKAQGDESKGDGDSAGEEGGTENRDKSKRKWFNLNLKGSDKKLG) are disordered. The segment covering 357 to 367 (SGNNLSNGSSS) has biased composition (low complexity).

This sequence belongs to the DnaJ family. B/II subfamily. Expressed at high levels in root cap, root tip meristematic region and elongation zones, and at lower levels in mature part of roots (at protein level). Constitutively expressed in seedlings, etiolated or not, roots, rosette leaves, cauline leaves, stems, flowers, siliques and pollen.

It is found in the cytoplasm. It localises to the cytoskeleton. Its subcellular location is the endoplasmic reticulum membrane. The protein localises to the golgi apparatus membrane. Plays a continuous role in plant development probably in the structural organization of compartments. Seems to be involved in early gravitropic signal transduction within the gravity-perceiving cells (statocytes), where it influences pH changes and auxin distribution. Probably affects the localization and/or activity of auxin efflux carrier components (PIN proteins) or other proteins involved in lateral auxin transport. The sequence is that of Chaperone protein dnaJ 15 (ATJ15) from Arabidopsis thaliana (Mouse-ear cress).